The following is a 286-amino-acid chain: Spermidine/putrescine transport system permease protein PotB (286 aa).

The Cytoplasmic portion of the chain corresponds to 1–13; it reads MKIINNKFQKITV. Residues 14–33 form a helical membrane-spanning segment; that stretch reads AIIFSWLIFFVLIPNLLVLA. Residues 34 to 71 lie on the Periplasmic side of the membrane; the sequence is VSFLTRDGSNFYAFPITIENYTNLFNPLYAQVVWNSLS. Positions 66 to 274 constitute an ABC transmembrane type-1 domain; that stretch reads VWNSLSMSGI…MALLIFVYYR (209 aa). A helical transmembrane segment spans residues 72–91; sequence MSGIATIICLLIGYPFAFMM. Over 92–100 the chain is Cytoplasmic; it reads SKIHPKYRP. The chain crosses the membrane as a helical span at residues 101–120; sequence LLLFLVVLPFWTNSLIRIYG. The Periplasmic portion of the chain corresponds to 121 to 151; it reads MKVFLGVKGILNTMLIDMGILSAPIRILNTE. A helical transmembrane segment spans residues 152-171; the sequence is IAVIIGLVYLLLPFMILPLY. Over 172–199 the chain is Cytoplasmic; that stretch reads SAIEKLDNRLLEAARDLGANTFQRFFRV. A helical transmembrane segment spans residues 200-219; the sequence is ILPLTMPGIIAGCLLVLLPA. The Periplasmic segment spans residues 220–252; sequence MGMFYVADLLGGAKVLLVGNVIKSEFLISRNWP. The helical transmembrane segment at 253-272 threads the bilayer; it reads FGSAVSIGLTVLMALLIFVY. The Cytoplasmic segment spans residues 273-286; it reads YRANKLLNRKVELE.

This sequence belongs to the binding-protein-dependent transport system permease family. CysTW subfamily.

The protein resides in the cell inner membrane. Functionally, required for the activity of the bacterial periplasmic transport system of putrescine and spermidine. The chain is Spermidine/putrescine transport system permease protein PotB (potB) from Haemophilus influenzae (strain ATCC 51907 / DSM 11121 / KW20 / Rd).